Consider the following 226-residue polypeptide: ATP synthase subunit a (226 aa).

The next 5 membrane-spanning stretches (helical) occupy residues 20 to 40 (LNWF…WLMP), 74 to 94 (FVSL…PYIF), 100 to 120 (LTLT…YGWI), 162 to 182 (LTAN…TGPM), and 187 to 207 (IILS…SAVA).

This sequence belongs to the ATPase A chain family. F-type ATPases have 2 components, CF(1) - the catalytic core - and CF(0) - the membrane proton channel. CF(1) has five subunits: alpha(3), beta(3), gamma(1), delta(1), epsilon(1). CF(0) has three main subunits: a, b and c.

The protein localises to the mitochondrion inner membrane. Functionally, mitochondrial membrane ATP synthase (F(1)F(0) ATP synthase or Complex V) produces ATP from ADP in the presence of a proton gradient across the membrane which is generated by electron transport complexes of the respiratory chain. F-type ATPases consist of two structural domains, F(1) - containing the extramembraneous catalytic core and F(0) - containing the membrane proton channel, linked together by a central stalk and a peripheral stalk. During catalysis, ATP synthesis in the catalytic domain of F(1) is coupled via a rotary mechanism of the central stalk subunits to proton translocation. Key component of the proton channel; it may play a direct role in the translocation of protons across the membrane. The polypeptide is ATP synthase subunit a (mt:ATPase6) (Aedes albopictus (Asian tiger mosquito)).